The primary structure comprises 151 residues: MHIKIDDLTGRQVVSLVNEHLHSMTLMSPPESIHALGLEKLRGPEITFWSAWEGDELAGCGALKELDTRHGEIKSMRTSASHLRKGVAKQVLQHIIEEAEKRGYERLSLETGSMASFEPARKLYESFGFQYCEPFADYGEDPNSVFMTKKL.

The 149-residue stretch at 3-151 (IKIDDLTGRQ…PNSVFMTKKL (149 aa)) folds into the N-acetyltransferase domain.

This sequence belongs to the acetyltransferase family.

This is an uncharacterized protein from Bacillus subtilis (strain 168).